Here is a 291-residue protein sequence, read N- to C-terminus: POU class 2 homeobox associating-factor 2 (291 aa).

Positions Lys-7–Arg-29 constitute an OCA domain. Positions Ala-176–Leu-219 are disordered. A compositionally biased stretch (low complexity) spans Ser-200–Ser-211.

The protein belongs to the POU2AF family.

Its function is as follows. Transcriptional coactivator that may regulate cell type-specific differentiation pathways. In Danio rerio (Zebrafish), this protein is POU class 2 homeobox associating-factor 2 (pou2af2).